The chain runs to 719 residues: 2'-5'-oligoadenylate synthase 2 (719 aa).

Glycine 2 carries N-myristoyl glycine lipidation. OAS domain regions lie at residues 11-335 (VPAQ…SWNV) and 343-683 (TPGH…WKVP). At lysine 378 the chain carries N6-acetyllysine. Serine 396 lines the ATP pocket. Mg(2+) is bound by residues aspartate 408, aspartate 410, and aspartate 481. ATP is bound by residues arginine 544 and lysine 547.

The protein belongs to the 2-5A synthase family. Homodimer. Mg(2+) serves as cofactor. Post-translationally, myristoylation is not essential for its activity. Glycosylated. Glycosylation is essential for its activity.

Its subcellular location is the cytoplasm. It is found in the perinuclear region. It catalyses the reaction 3 ATP = 5'-triphosphoadenylyl-(2'-&gt;5')-adenylyl-(2'-&gt;5')-adenosine + 2 diphosphate. Its activity is regulated as follows. Produced as a latent enzyme which is activated by double stranded RNA (dsRNA) generated during the course of viral infection. The dsRNA activator must be at least 15 nucleotides long, and no modification of the 2'-hydroxyl group is tolerated. ssRNA or dsDNA do not act as activators. Strongly inhibited by copper, iron and zinc ions. Partially inhibited by cobalt and nickel ions. Functionally, interferon-induced, dsRNA-activated antiviral enzyme which plays a critical role in cellular innate antiviral response. Activated by detection of double stranded RNA (dsRNA): polymerizes higher oligomers of 2'-5'-oligoadenylates (2-5A) from ATP which then bind to the inactive monomeric form of ribonuclease L (RNASEL) leading to its dimerization and subsequent activation. Activation of RNASEL leads to degradation of cellular as well as viral RNA, resulting in the inhibition of protein synthesis, thus terminating viral replication. Can mediate the antiviral effect via the classical RNASEL-dependent pathway or an alternative antiviral pathway independent of RNASEL. In addition, it may also play a role in other cellular processes such as apoptosis, cell growth, differentiation and gene regulation. May act as a negative regulator of lactation, stopping lactation in virally infected mammary gland lobules, thereby preventing transmission of viruses to neonates. Non-infected lobules would not be affected, allowing efficient pup feeding during infection. The protein is 2'-5'-oligoadenylate synthase 2 of Homo sapiens (Human).